The chain runs to 1888 residues: E3 ubiquitin-protein ligase UPL3 (1888 aa).

The segment covering 1–10 (METRSRKRAE) has biased composition (basic and acidic residues). The tract at residues 1–157 (METRSRKRAE…NGGFMHPNMS (157 aa)) is disordered. Low complexity predominate over residues 41 to 81 (LSSSSSSSLAPTPPSSSTTTRSRSSRSAAAAAPMDTSTDSS). A compositionally biased stretch (basic and acidic residues) spans 97-124 (NSDKGKEKEHDVRIRERERERDRAREQL). A compositionally biased stretch (acidic residues) spans 137 to 146 (DEDDDNDSED). ARM repeat units lie at residues 227-267 (EDSL…HLCD), 270-310 (PSSC…KISQ), 312-349 (HPTA…NMCK), and 351-390 (LPSD…RIAE). Disordered regions lie at residues 660–711 (KPSH…IGAN), 970–1119 (ALKP…LPMC), 1134–1157 (DDDG…GAAA), and 1280–1307 (RLSV…VESQ). A compositionally biased stretch (low complexity) spans 986-1002 (PSGAGVSSPSSSTPAST). Residues 1019–1029 (TSKKDPVHEKG) are compositionally biased toward basic and acidic residues. Over residues 1076 to 1113 (SSEDEELEISPVDIDDALVIEEDDISDDEDDDNEDVLD) the composition is skewed to acidic residues. Composition is skewed to low complexity over residues 1148 to 1157 (ASGGTSGAAA) and 1286 to 1303 (ASST…TNSS). Residues 1377–1451 (AKVPLDEFVN…ALNRLQQQQG (75 aa)) are K-box. The 399-residue stretch at 1490 to 1888 (MYSSQKAVLE…NEGQGSFDLS (399 aa)) folds into the HECT domain. Cys-1855 functions as the Glycyl thioester intermediate in the catalytic mechanism.

This sequence belongs to the UPL family. K-HECT subfamily. Widely expressed.

It catalyses the reaction S-ubiquitinyl-[E2 ubiquitin-conjugating enzyme]-L-cysteine + [acceptor protein]-L-lysine = [E2 ubiquitin-conjugating enzyme]-L-cysteine + N(6)-ubiquitinyl-[acceptor protein]-L-lysine.. It functions in the pathway protein modification; protein ubiquitination. Functionally, probable E3 ubiquitin-protein ligase which mediates ubiquitination and subsequent proteasomal degradation of target proteins. Involved in the repression of endoreduplication process and the cell morphogenesis in the trichomes. The sequence is that of E3 ubiquitin-protein ligase UPL3 (UPL3) from Arabidopsis thaliana (Mouse-ear cress).